The chain runs to 354 residues: NADH-ubiquinone oxidoreductase chain 1 (354 aa).

8 helical membrane passes run 43 to 63, 108 to 128, 139 to 159, 180 to 200, 211 to 231, 264 to 284, 298 to 318, and 334 to 354; these read LFWSLSFYVVVLLSVAYLTLF, PALFFLGPCFMLLHSFILWGC, FFWGGLYVLSVLSVGVYGVVL, VISYEVMLVFLYLCPFFVVGS, VSGCNGGVLFLVLPWWVFCVL, IFIAEYSNILFLSTLTSVLFL, LISSSVIGSFFSFMVVFLIVL, and LIWCQILPILMSCFALFLMII.

This sequence belongs to the complex I subunit 1 family.

Its subcellular location is the mitochondrion inner membrane. The catalysed reaction is a ubiquinone + NADH + 5 H(+)(in) = a ubiquinol + NAD(+) + 4 H(+)(out). Its function is as follows. Core subunit of the mitochondrial membrane respiratory chain NADH dehydrogenase (Complex I) that is believed to belong to the minimal assembly required for catalysis. Complex I functions in the transfer of electrons from NADH to the respiratory chain. The immediate electron acceptor for the enzyme is believed to be ubiquinone. The protein is NADH-ubiquinone oxidoreductase chain 1 (ND1) of Pecten maximus (King scallop).